The chain runs to 182 residues: ATP synthase subunit delta (182 aa).

It belongs to the ATPase delta chain family. In terms of assembly, F-type ATPases have 2 components, F(1) - the catalytic core - and F(0) - the membrane proton channel. F(1) has five subunits: alpha(3), beta(3), gamma(1), delta(1), epsilon(1). F(0) has three main subunits: a(1), b(2) and c(10-14). The alpha and beta chains form an alternating ring which encloses part of the gamma chain. F(1) is attached to F(0) by a central stalk formed by the gamma and epsilon chains, while a peripheral stalk is formed by the delta and b chains.

Its subcellular location is the cell membrane. Functionally, f(1)F(0) ATP synthase produces ATP from ADP in the presence of a proton or sodium gradient. F-type ATPases consist of two structural domains, F(1) containing the extramembraneous catalytic core and F(0) containing the membrane proton channel, linked together by a central stalk and a peripheral stalk. During catalysis, ATP synthesis in the catalytic domain of F(1) is coupled via a rotary mechanism of the central stalk subunits to proton translocation. This protein is part of the stalk that links CF(0) to CF(1). It either transmits conformational changes from CF(0) to CF(1) or is implicated in proton conduction. The polypeptide is ATP synthase subunit delta (Alkalihalophilus pseudofirmus (strain ATCC BAA-2126 / JCM 17055 / OF4) (Bacillus pseudofirmus)).